The sequence spans 474 residues: tRNA modification GTPase MnmE (474 aa).

(6S)-5-formyl-5,6,7,8-tetrahydrofolate contacts are provided by Arg-35, Glu-92, and Lys-135. The TrmE-type G domain occupies 231 to 396 (GLHVVLAGQP…LRAALLEIAG (166 aa)). A K(+)-binding site is contributed by Asn-241. GTP contacts are provided by residues 241–246 (NVGKSS), 260–266 (TPIAGTT), 285–288 (DTAG), and 377–379 (SAR). Ser-245 contributes to the Mg(2+) binding site. Residues Thr-260, Ile-262, and Thr-265 each coordinate K(+). Thr-266 provides a ligand contact to Mg(2+). Lys-474 serves as a coordination point for (6S)-5-formyl-5,6,7,8-tetrahydrofolate.

It belongs to the TRAFAC class TrmE-Era-EngA-EngB-Septin-like GTPase superfamily. TrmE GTPase family. Homodimer. Heterotetramer of two MnmE and two MnmG subunits. K(+) is required as a cofactor.

It localises to the cytoplasm. Functionally, exhibits a very high intrinsic GTPase hydrolysis rate. Involved in the addition of a carboxymethylaminomethyl (cmnm) group at the wobble position (U34) of certain tRNAs, forming tRNA-cmnm(5)s(2)U34. In Ralstonia nicotianae (strain ATCC BAA-1114 / GMI1000) (Ralstonia solanacearum), this protein is tRNA modification GTPase MnmE.